A 387-amino-acid chain; its full sequence is Protein RecA (387 aa).

78–85 (GPESSGKT) is a binding site for ATP. Over residues 350–369 (QTREVKSIERDPKETKETKS) the composition is skewed to basic and acidic residues. Residues 350–387 (QTREVKSIERDPKETKETKSKQPVSFSTEAEVDIAVGE) are disordered.

Belongs to the RecA family.

Its subcellular location is the cytoplasm. In terms of biological role, can catalyze the hydrolysis of ATP in the presence of single-stranded DNA, the ATP-dependent uptake of single-stranded DNA by duplex DNA, and the ATP-dependent hybridization of homologous single-stranded DNAs. It interacts with LexA causing its activation and leading to its autocatalytic cleavage. This is Protein RecA from Leptospira meyeri.